The chain runs to 320 residues: MNWISNYVRPTINSLFSRREVPENLWRKCPECGTMLFHRELSDNLFVCISCDHHMAITPRQRFEALFDGGVFSEVKVPAPIADPLQFKDQKKYPERMKSAVKATGEPEAMLVAEGEIGRTPIVAAAQDFSFMGGSMGMYVGNAIIAAAERAVALKRPLILFSAAGGARMQEGILSLMQMPRTTVAVQMLKEAGLPYIVVLTHPTTGGVTASYAMLGDVQIAEPNALICFAGPRVIEQTIREKLPEGFQRAEYLLDHGMLDRVTHRMKLRDELIRITRMLLGLGPAIVGDLPAPDPAPATPEPQKAAPSAPAQDKPGAGRS.

Residues 25-294 (LWRKCPECGT…AIVGDLPAPD (270 aa)) form the CoA carboxyltransferase N-terminal domain. Residues Cys29, Cys32, Cys48, and Cys51 each coordinate Zn(2+). Residues 29–51 (CPECGTMLFHRELSDNLFVCISC) form a C4-type zinc finger. Residues 290 to 320 (LPAPDPAPATPEPQKAAPSAPAQDKPGAGRS) form a disordered region.

This sequence belongs to the AccD/PCCB family. As to quaternary structure, acetyl-CoA carboxylase is a heterohexamer composed of biotin carboxyl carrier protein (AccB), biotin carboxylase (AccC) and two subunits each of ACCase subunit alpha (AccA) and ACCase subunit beta (AccD). Zn(2+) is required as a cofactor.

The protein localises to the cytoplasm. The catalysed reaction is N(6)-carboxybiotinyl-L-lysyl-[protein] + acetyl-CoA = N(6)-biotinyl-L-lysyl-[protein] + malonyl-CoA. It functions in the pathway lipid metabolism; malonyl-CoA biosynthesis; malonyl-CoA from acetyl-CoA: step 1/1. In terms of biological role, component of the acetyl coenzyme A carboxylase (ACC) complex. Biotin carboxylase (BC) catalyzes the carboxylation of biotin on its carrier protein (BCCP) and then the CO(2) group is transferred by the transcarboxylase to acetyl-CoA to form malonyl-CoA. The protein is Acetyl-coenzyme A carboxylase carboxyl transferase subunit beta of Dinoroseobacter shibae (strain DSM 16493 / NCIMB 14021 / DFL 12).